Consider the following 288-residue polypeptide: NADPH-dependent aldehyde reductase 1, chloroplastic (288 aa).

The span at 1–18 shows a compositional bias: basic and acidic residues; that stretch reads MASEKQKQHAQPGKEHVM. The disordered stretch occupies residues 1 to 32; the sequence is MASEKQKQHAQPGKEHVMESSPQFSSSDYQPS. Residues 20–32 show a composition bias toward polar residues; sequence SSPQFSSSDYQPS. Position 47-71 (47-71) interacts with NADP(+); the sequence is SGIGRAVGYCFASEGATVAFTYVKG. Substrate is bound at residue Ser179. The Proton acceptor role is filled by Tyr192.

This sequence belongs to the short-chain dehydrogenases/reductases (SDR) family.

It localises to the plastid. Its subcellular location is the chloroplast. Aldehyde reductase that catalyzes the reduction of the aldehyde carbonyl groups on saturated and alpha,beta-unsaturated aldehydes with more than 5 carbons. No activity on alpha,beta-unsaturated ketones. Can use propionaldehyde, butyraldehyde, methylglyoxal, (e)-2-pentenal, (E)-2-hexenal, (Z)-3-hexenal and (E)-2-nonenal as substrates, but not propenal (acrolein), crotonaldehyde, 2-butanone, 3-buten-2-one or 1-penten-3-one. May act as a short alcohol-polyol-sugar dehydrogenase possibly related to carbohydrate metabolism and the acquisition of desiccation tolerance. May also be involved in signal transduction. The protein is NADPH-dependent aldehyde reductase 1, chloroplastic of Arabidopsis thaliana (Mouse-ear cress).